Consider the following 758-residue polypeptide: Vitamin K-dependent gamma-carboxylase (758 aa).

The interval 1 to 34 (MAVSARPARAPRGSDKVKKDKAAQTSGPRQGSRM) is disordered. Ala2 bears the N-acetylalanine mark. Over 2–60 (AVSARPARAPRGSDKVKKDKAAQTSGPRQGSRMGKLLGFEWTDVSSWERLVTLLNRPTD) the chain is Cytoplasmic. The segment covering 12–22 (RGSDKVKKDKA) has biased composition (basic and acidic residues). Residues 61–81 (PAGLAVFRFLFGLMMVLDIPQ) traverse the membrane as a helical segment. The Lumenal segment spans residues 82-113 (ERGLSSLDRRYLDGLEVCRFPLLDALQPLPLD). An intrachain disulfide couples Cys99 to Cys450. Residues 114–134 (WMYLIYTIMFLGALGMMLGLC) form a helical membrane-spanning segment. The Cytoplasmic segment spans residues 135–136 (YR). A helical membrane pass occupies residues 137–157 (ISCVLFLLPYWYVFLLDKTSW). The Lumenal portion of the chain corresponds to 158–292 (NNHSYLYGLL…VSYFHCMNSQ (135 aa)). Residues 293 to 313 (LFSIGMFPYVMLASSPLFCSP) form a helical membrane-spanning segment. Topologically, residues 314-363 (EWPRKLVAHCPKKLQELLPLRTAPQPSTSCMYKRSRARGSQKPGLRHKLS) are cytoplasmic. The chain crosses the membrane as a helical span at residues 364–384 (TAFTLLYLLEQLFLPYSHFLT). Over 385-758 (QGYNNWTNGL…PDSHPVHSEF (374 aa)) the chain is Lumenal. Residues 727 to 758 (PFEPAGEPSPVNTDSSNPNPPEPDSHPVHSEF) are disordered. Residues 749 to 758 (PDSHPVHSEF) show a composition bias toward basic and acidic residues.

Monomer. May interact with CALU. In terms of processing, the N-terminus is blocked.

The protein localises to the endoplasmic reticulum membrane. The enzyme catalyses 4-carboxy-L-glutamyl-[protein] + 2,3-epoxyphylloquinone + H2O + H(+) = phylloquinol + L-glutamyl-[protein] + CO2 + O2. In terms of biological role, mediates the vitamin K-dependent carboxylation of glutamate residues to calcium-binding gamma-carboxyglutamate (Gla) residues with the concomitant conversion of the reduced hydroquinone form of vitamin K to vitamin K epoxide. Catalyzes gamma-carboxylation of various proteins, such as blood coagulation factors (F2, F7, F9 and F10), osteocalcin (BGLAP) or matrix Gla protein (MGP). The protein is Vitamin K-dependent gamma-carboxylase (GGCX) of Bos taurus (Bovine).